We begin with the raw amino-acid sequence, 553 residues long: Carboxypeptidase Y homolog A (553 aa).

Residues 1-17 (MRVLSTTLLIGAAAAAV) form the signal peptide. The propeptide occupies 18 to 134 (SPPQQVLQAP…RLEAFDLRVK (117 aa)). 5 cysteine pairs are disulfide-bonded: C189-C428, C323-C337, C347-C370, C354-C363, and C392-C398. A glycan (N-linked (GlcNAc...) asparagine) is linked at N220. Residue S276 is part of the active site. The active site involves D467. N-linked (GlcNAc...) asparagine glycosylation is present at N518. H529 is an active-site residue.

It belongs to the peptidase S10 family.

The protein localises to the vacuole. The catalysed reaction is Release of a C-terminal amino acid with broad specificity.. Its function is as follows. Vacuolar carboxypeptidase involved in degradation of small peptides. Digests preferentially peptides containing an aliphatic or hydrophobic residue in P1' position, as well as methionine, leucine or phenylalanine in P1 position of ester substrate. The sequence is that of Carboxypeptidase Y homolog A (cpyA) from Talaromyces stipitatus (strain ATCC 10500 / CBS 375.48 / QM 6759 / NRRL 1006) (Penicillium stipitatum).